The following is a 493-amino-acid chain: Na(+)/H(+) antiporter subunit D (493 aa).

14 consecutive transmembrane segments (helical) span residues 4–23, 30–52, 72–94, 107–126, 130–149, 162–184, 204–226, 233–255, 270–292, 299–321, 325–347, 368–390, 405–427, and 448–470; these read LVILPILIPFIVGSFLILFA, RVISGFAVVGMLLVSIYLAVDVY, LVADLFATMMVILASIVGVVCLF, YYFYPFYFFLLAGVNGAFLT, FNLFVFFEVMLIASYILIVL, YVVINVFASILFIVGVAYIYSIT, VLNVIAVIFLVVFAMKGGLFPLY, YFGPPAAIAALFGGLLTKVGIYA, FTHTLILILAGLTMFFGVLGAVS, ILSYHIISQVGYMVMGLGIYTQL, GAIYYIAHHIIVKAALFLFAGAT, WLAWMFFISAISLAGIPPLSGFF, YIIAAVALAVGLLTLFSMMKIFI, and LLLPIVPLVALTIILGFAAEPIF.

Belongs to the CPA3 antiporters (TC 2.A.63) subunit D family. Forms a heterooligomeric complex that consists of seven subunits: MrpA, MrpB, MrpC, MrpD, MrpE, MrpF and MrpG.

The protein resides in the cell membrane. Mnh complex is a Na(+)Li(+)/H(+) antiporter involved in Na(+) and/or Li(+) excretion and Na(+) resistance. Na(+)/H(+) antiport consumes a transmembrane electrical potential, and is thus inferred to be electrogenic. Does not transport K(+), Ca(2+) or Mg(2+). In terms of biological role, mrp complex is a Na(+)/H(+) antiporter involved in Na(+) excretion and Na(+) resistance. The chain is Na(+)/H(+) antiporter subunit D (mrpD) from Alkalihalophilus pseudofirmus (strain ATCC BAA-2126 / JCM 17055 / OF4) (Bacillus pseudofirmus).